The following is a 130-amino-acid chain: Protein ApaG (130 aa).

Positions 3–127 (SAMTRSINIL…FSLDSPHAKR (125 aa)) constitute an ApaG domain.

The sequence is that of Protein ApaG from Parvibaculum lavamentivorans (strain DS-1 / DSM 13023 / NCIMB 13966).